A 393-amino-acid chain; its full sequence is Succinate--CoA ligase [ADP-forming] subunit beta (393 aa).

One can recognise an ATP-grasp domain in the interval 9-242; the sequence is KELFAKHGVP…RAATDPLEWK (234 aa). Residues K45, 52-54, S94, and E99 contribute to the ATP site; that span reads GRG. Mg(2+) is bound by residues N191 and D211. Substrate is bound by residues N262 and 324-326; that span reads GIT.

It belongs to the succinate/malate CoA ligase beta subunit family. As to quaternary structure, heterotetramer of two alpha and two beta subunits. Mg(2+) is required as a cofactor.

It catalyses the reaction succinate + ATP + CoA = succinyl-CoA + ADP + phosphate. The catalysed reaction is GTP + succinate + CoA = succinyl-CoA + GDP + phosphate. Its pathway is carbohydrate metabolism; tricarboxylic acid cycle; succinate from succinyl-CoA (ligase route): step 1/1. Functionally, succinyl-CoA synthetase functions in the citric acid cycle (TCA), coupling the hydrolysis of succinyl-CoA to the synthesis of either ATP or GTP and thus represents the only step of substrate-level phosphorylation in the TCA. The beta subunit provides nucleotide specificity of the enzyme and binds the substrate succinate, while the binding sites for coenzyme A and phosphate are found in the alpha subunit. The chain is Succinate--CoA ligase [ADP-forming] subunit beta from Mycobacterium leprae (strain Br4923).